The chain runs to 275 residues: T-cell ecto-ADP-ribosyltransferase 1 (275 aa).

An N-terminal signal peptide occupies residues 1–20 (MPSNICKFFLTWWLIQQVTG). 2 disulfide bridges follow: C41-C243 and C141-C193. The N-linked (GlcNAc...) asparagine glycan is linked to N58. The region spanning 61 to 238 (EKLKVAWEEA…IFLDSPKRKK (178 aa)) is the TR mART core domain. Y98, R146, and Q164 together coordinate NAD(+). The active site involves R146. S167 is an active-site residue. S202 serves as a coordination point for NAD(+). Residue E209 is part of the active site. The GPI-anchor amidated serine moiety is linked to residue S246. A propeptide spans 247-275 (SAGTRESCVSLFLVVLTSLLVQLLCLAEP) (removed in mature form).

It belongs to the Arg-specific ADP-ribosyltransferase family. As to expression, postthymic T-cells.

Its subcellular location is the cell membrane. It carries out the reaction L-arginyl-[protein] + NAD(+) = N(omega)-(ADP-D-ribosyl)-L-arginyl-[protein] + nicotinamide + H(+). It catalyses the reaction NAD(+) + H2O = ADP-D-ribose + nicotinamide + H(+). Its function is as follows. Has NAD(+) glycohydrolase activity and extremely low ADP-ribosyltransferase activity. The sequence is that of T-cell ecto-ADP-ribosyltransferase 1 (Art2a) from Rattus norvegicus (Rat).